We begin with the raw amino-acid sequence, 268 residues long: Malonyl-[acyl-carrier protein] O-methyltransferase (268 aa).

Belongs to the methyltransferase superfamily.

The catalysed reaction is malonyl-[ACP] + S-adenosyl-L-methionine = malonyl-[ACP] methyl ester + S-adenosyl-L-homocysteine. Its pathway is cofactor biosynthesis; biotin biosynthesis. Converts the free carboxyl group of a malonyl-thioester to its methyl ester by transfer of a methyl group from S-adenosyl-L-methionine (SAM). It allows to synthesize pimeloyl-ACP via the fatty acid synthetic pathway. This chain is Malonyl-[acyl-carrier protein] O-methyltransferase, found in Prosthecochloris aestuarii (strain DSM 271 / SK 413).